The primary structure comprises 93 residues: Large ribosomal subunit protein uL23cz/uL23cy (93 aa).

The protein belongs to the universal ribosomal protein uL23 family. In terms of assembly, part of the 50S ribosomal subunit.

Its subcellular location is the plastid. It is found in the chloroplast. In terms of biological role, binds to 23S rRNA. The sequence is that of Large ribosomal subunit protein uL23cz/uL23cy (rpl23-A) from Piper cenocladum (Ant piper).